A 495-amino-acid chain; its full sequence is L-arabinose isomerase (495 aa).

Mn(2+) contacts are provided by Glu-305, Glu-332, His-349, and His-448.

Belongs to the arabinose isomerase family. The cofactor is Mn(2+).

It carries out the reaction beta-L-arabinopyranose = L-ribulose. Its pathway is carbohydrate degradation; L-arabinose degradation via L-ribulose; D-xylulose 5-phosphate from L-arabinose (bacterial route): step 1/3. Catalyzes the conversion of L-arabinose to L-ribulose. The polypeptide is L-arabinose isomerase (Actinobacillus succinogenes (strain ATCC 55618 / DSM 22257 / CCUG 43843 / 130Z)).